We begin with the raw amino-acid sequence, 368 residues long: Histidinol dehydrogenase (368 aa).

The substrate site is built by T197, Q218, and H221. Residues Q218 and H221 each coordinate Zn(2+). Residues E276 and H277 each act as proton acceptor in the active site. 4 residues coordinate substrate: H277, D306, E358, and H363. D306 provides a ligand contact to Zn(2+). H363 provides a ligand contact to Zn(2+).

This sequence belongs to the histidinol dehydrogenase family. Requires Zn(2+) as cofactor.

It carries out the reaction L-histidinol + 2 NAD(+) + H2O = L-histidine + 2 NADH + 3 H(+). It participates in amino-acid biosynthesis; L-histidine biosynthesis; L-histidine from 5-phospho-alpha-D-ribose 1-diphosphate: step 9/9. Functionally, catalyzes the sequential NAD-dependent oxidations of L-histidinol to L-histidinaldehyde and then to L-histidine. The sequence is that of Histidinol dehydrogenase from Pyrobaculum aerophilum (strain ATCC 51768 / DSM 7523 / JCM 9630 / CIP 104966 / NBRC 100827 / IM2).